The sequence spans 204 residues: Glutathione S-transferase GST-4.5 (204 aa).

The region spanning 1–77 (MKLYTKPGAC…YIADTAPLTG (77 aa)) is the GST N-terminal domain. Residues Cys-10, Val-49, 61-62 (QN), and His-102 contribute to the glutathione site. In terms of domain architecture, GST C-terminal spans 83-204 (TARSRAEINR…QAALQAEGLN (122 aa)).

Belongs to the GST superfamily. As to quaternary structure, homodimer.

The protein resides in the cytoplasm. The catalysed reaction is RX + glutathione = an S-substituted glutathione + a halide anion + H(+). Its function is as follows. Conjugation of reduced glutathione to a wide number of exogenous and endogenous hydrophobic electrophiles. This Xanthomonas campestris pv. campestris (strain ATCC 33913 / DSM 3586 / NCPPB 528 / LMG 568 / P 25) protein is Glutathione S-transferase GST-4.5 (gst).